Consider the following 61-residue polypeptide: Antimicrobial peptide 1 (61 aa).

The first 24 residues, L1–A24, serve as a signal peptide directing secretion. Q25 bears the Pyrrolidone carboxylic acid mark. 3 disulfide bridges follow: C26–C43, C33–C47, and C42–C58.

It belongs to the AMP family. As to quaternary structure, homodimer. In terms of processing, three disulfide bonds are present. In terms of tissue distribution, found only in seeds.

The protein localises to the secreted. In terms of biological role, possesses antifungal activity and is also active on two tested Gram-positive bacteria but is non-toxic for Gram-negative bacteria and cultured human cells. In Mirabilis jalapa (Garden four-o'clock), this protein is Antimicrobial peptide 1 (AMP1).